We begin with the raw amino-acid sequence, 288 residues long: Bifunctional protein FolD 2 (288 aa).

Residues 166–168 (GRS) and Ser-191 each bind NADP(+).

Belongs to the tetrahydrofolate dehydrogenase/cyclohydrolase family. In terms of assembly, homodimer.

It catalyses the reaction (6R)-5,10-methylene-5,6,7,8-tetrahydrofolate + NADP(+) = (6R)-5,10-methenyltetrahydrofolate + NADPH. The catalysed reaction is (6R)-5,10-methenyltetrahydrofolate + H2O = (6R)-10-formyltetrahydrofolate + H(+). Its pathway is one-carbon metabolism; tetrahydrofolate interconversion. Catalyzes the oxidation of 5,10-methylenetetrahydrofolate to 5,10-methenyltetrahydrofolate and then the hydrolysis of 5,10-methenyltetrahydrofolate to 10-formyltetrahydrofolate. In Myxococcus xanthus (strain DK1622), this protein is Bifunctional protein FolD 2.